Reading from the N-terminus, the 631-residue chain is Phosphomethylpyrimidine synthase (631 aa).

Substrate contacts are provided by residues Asn239, Met268, Tyr297, His333, 353–355 (SRG), 394–397 (DGLR), and Glu433. His437 is a binding site for Zn(2+). Tyr460 provides a ligand contact to substrate. Zn(2+) is bound at residue His501. The [4Fe-4S] cluster site is built by Cys581, Cys584, and Cys589.

Belongs to the ThiC family. Homodimer. [4Fe-4S] cluster serves as cofactor.

It carries out the reaction 5-amino-1-(5-phospho-beta-D-ribosyl)imidazole + S-adenosyl-L-methionine = 4-amino-2-methyl-5-(phosphooxymethyl)pyrimidine + CO + 5'-deoxyadenosine + formate + L-methionine + 3 H(+). The protein operates within cofactor biosynthesis; thiamine diphosphate biosynthesis. In terms of biological role, catalyzes the synthesis of the hydroxymethylpyrimidine phosphate (HMP-P) moiety of thiamine from aminoimidazole ribotide (AIR) in a radical S-adenosyl-L-methionine (SAM)-dependent reaction. The polypeptide is Phosphomethylpyrimidine synthase (Escherichia coli O45:K1 (strain S88 / ExPEC)).